The sequence spans 354 residues: Erythroferrone (354 aa).

Residues 1–28 (MAPARRPAGARLLLVYAGLLAAAAAGLG) form the signal peptide. Composition is skewed to low complexity over residues 26–37 (GLGSPEPGAPSR) and 51–62 (PRGPGESRAGPA). The interval 26-123 (GLGSPEPGAP…PGPPGPQGPP (98 aa)) is disordered. Positions 69–80 (TAERAHSVDPRD) are enriched in basic and acidic residues. The span at 94–107 (NGKKRSRGKAKKLK) shows a compositional bias: basic residues. 6 positions are modified to hydroxyproline: P111, P113, P114, P116, P117, and P119. Residues 111-123 (PGPPGPPGPQGPP) are compositionally biased toward pro residues. Residues 199–354 (APRVEAAFLC…SHFSAVLLGV (156 aa)) form the C1q domain. N-linked (GlcNAc...) asparagine glycans are attached at residues N243, N295, and N333.

Belongs to the adipolin/erythroferrone family. Homodimer; disulfide-linked. Forms trimer, hexamers and higher molecular weight oligomers. May form heteromeric complexes with C1QTNF2 and C1QTNF12 and, to a lesser extent, with C1QTNF5 and C1QTNF10. Interacts with BMP5 and BMP7; the interaction inhibits BMP-induced transcription of HAMP. Interacts with BMP6; the interaction inhibits BMP-induced transcription of HAMP. Interacts with BMP2. Interacts with heterodimers composed of BMP2 and BMP6 in vitro, the interaction inhibits the heterodimer binding to its receptor BMPR1A /ALK3 and thereby suppresses expression of HAMP. In terms of processing, N-glycosylated; required for secretion of the mature protein.

Its subcellular location is the secreted. Iron-regulatory hormone that acts as an erythroid regulator after hemorrhage: produced by erythroblasts following blood loss and mediates suppression of hepcidin (HAMP) expression in the liver, thereby promoting increased iron absorption and mobilization from stores. Promotes lipid uptake into adipocytes and hepatocytes via transcriptional up-regulation of genes involved in fatty acid uptake. Inhibits apoptosis and inflammatory response in cardiomyocytes via promotion of sphingosine-1-phosphate (S1P) and cAMP-dependent activation of AKT signaling. Inhibits autophagy induced by nutrient deficiency in hepatocytes via promoting the phosphorylation of IRS1, AKT, and MTOR, and thereby subsequent activation of the AKT-MTOR signaling pathway. Negatively regulates the differentiation of osteoblasts, potentially via sequestering BMP2, and thereby inhibits the activation of SMAD signaling. The reduction in BMP2 signaling in osteoblasts also results in an increase in expression of the osteoclastogenesis-promoting factors TNFSF11/RANKL and SOST, thereby indirectly promotes bone resorption. The polypeptide is Erythroferrone (Homo sapiens (Human)).